The primary structure comprises 126 residues: L-alanine exporter AlaE (126 aa).

A helical transmembrane segment spans residues 23-43 (FALVVYCFFTGMAIEILLSGM).

Belongs to the AlaE exporter family.

The protein localises to the cell inner membrane. Its function is as follows. Exports L-alanine. This is L-alanine exporter AlaE from Sodalis glossinidius (strain morsitans).